A 252-amino-acid chain; its full sequence is Ribose-5-phosphate isomerase (252 aa).

This sequence belongs to the ribose 5-phosphate isomerase family.

Its subcellular location is the cytoplasm. The enzyme catalyses aldehydo-D-ribose 5-phosphate = D-ribulose 5-phosphate. The protein operates within carbohydrate degradation; pentose phosphate pathway; D-ribose 5-phosphate from D-ribulose 5-phosphate (non-oxidative stage): step 1/1. This chain is Ribose-5-phosphate isomerase (RKI1), found in Debaryomyces hansenii (strain ATCC 36239 / CBS 767 / BCRC 21394 / JCM 1990 / NBRC 0083 / IGC 2968) (Yeast).